Reading from the N-terminus, the 63-residue chain is Cytochrome c oxidase subunit 7C, mitochondrial (63 aa).

The N-terminal 16 residues, 1 to 16 (MLGQSIRRFTTSVVRR), are a transit peptide targeting the mitochondrion. Topologically, residues 17-33 (SHYEEGPGKNLPFSVEN) are mitochondrial matrix. Position 25 is an N6-acetyllysine; alternate (lysine 25). Lysine 25 is modified (N6-succinyllysine; alternate). Residues 34 to 60 (KWSLLAKMCLYFGSAFATPFLVVRHQL) form a helical membrane-spanning segment. At 61-63 (LKT) the chain is on the mitochondrial intermembrane side.

The protein belongs to the cytochrome c oxidase VIIc family. As to quaternary structure, component of the cytochrome c oxidase (complex IV, CIV), a multisubunit enzyme composed of 14 subunits. The complex is composed of a catalytic core of 3 subunits MT-CO1, MT-CO2 and MT-CO3, encoded in the mitochondrial DNA, and 11 supernumerary subunits COX4I1 (or COX4I2), COX5A, COX5B, COX6A1 (or COX6A2), COX6B1 (or COX6B2), COX6C, COX7A2 (or COX7A1), COX7B, COX7C, COX8A and NDUFA4, which are encoded in the nuclear genome. The complex exists as a monomer or a dimer and forms supercomplexes (SCs) in the inner mitochondrial membrane with NADH-ubiquinone oxidoreductase (complex I, CI) and ubiquinol-cytochrome c oxidoreductase (cytochrome b-c1 complex, complex III, CIII), resulting in different assemblies (supercomplex SCI(1)III(2)IV(1) and megacomplex MCI(2)III(2)IV(2)). Interacts with RAB5IF.

The protein resides in the mitochondrion inner membrane. It functions in the pathway energy metabolism; oxidative phosphorylation. In terms of biological role, component of the cytochrome c oxidase, the last enzyme in the mitochondrial electron transport chain which drives oxidative phosphorylation. The respiratory chain contains 3 multisubunit complexes succinate dehydrogenase (complex II, CII), ubiquinol-cytochrome c oxidoreductase (cytochrome b-c1 complex, complex III, CIII) and cytochrome c oxidase (complex IV, CIV), that cooperate to transfer electrons derived from NADH and succinate to molecular oxygen, creating an electrochemical gradient over the inner membrane that drives transmembrane transport and the ATP synthase. Cytochrome c oxidase is the component of the respiratory chain that catalyzes the reduction of oxygen to water. Electrons originating from reduced cytochrome c in the intermembrane space (IMS) are transferred via the dinuclear copper A center (CU(A)) of subunit 2 and heme A of subunit 1 to the active site in subunit 1, a binuclear center (BNC) formed by heme A3 and copper B (CU(B)). The BNC reduces molecular oxygen to 2 water molecules using 4 electrons from cytochrome c in the IMS and 4 protons from the mitochondrial matrix. The chain is Cytochrome c oxidase subunit 7C, mitochondrial (COX7C) from Homo sapiens (Human).